We begin with the raw amino-acid sequence, 236 residues long: Ubiquinone biosynthesis O-methyltransferase (236 aa).

4 residues coordinate S-adenosyl-L-methionine: Arg39, Gly59, Asp80, and Met124.

This sequence belongs to the methyltransferase superfamily. UbiG/COQ3 family.

The catalysed reaction is a 3-demethylubiquinol + S-adenosyl-L-methionine = a ubiquinol + S-adenosyl-L-homocysteine + H(+). The enzyme catalyses a 3-(all-trans-polyprenyl)benzene-1,2-diol + S-adenosyl-L-methionine = a 2-methoxy-6-(all-trans-polyprenyl)phenol + S-adenosyl-L-homocysteine + H(+). Its pathway is cofactor biosynthesis; ubiquinone biosynthesis. In terms of biological role, O-methyltransferase that catalyzes the 2 O-methylation steps in the ubiquinone biosynthetic pathway. This Shewanella pealeana (strain ATCC 700345 / ANG-SQ1) protein is Ubiquinone biosynthesis O-methyltransferase.